Consider the following 428-residue polypeptide: Methyl-branched lipid omega-hydroxylase (428 aa).

Cys-379 serves as a coordination point for heme.

Belongs to the cytochrome P450 family. Heme serves as cofactor.

The enzyme catalyses a methyl-branched lipid + O2 + 2 reduced ferredoxin [iron-sulfur] cluster + 2 H(+) = an omega-hydroxy-methyl-branched lipid + H2O + 2 oxidized ferredoxin [iron-sulfur] cluster.. It catalyses the reaction cholest-4-en-3-one + 6 reduced [2Fe-2S]-[ferredoxin] + 3 O2 + 5 H(+) = (25R)-3-oxocholest-4-en-26-oate + 6 oxidized [2Fe-2S]-[ferredoxin] + 4 H2O. The protein operates within lipid metabolism; branched-chain fatty acid metabolism. Functionally, primarily hydroxylates the omega-carbon of a number of methyl-branched lipids, including (2E,6E)-farnesol, phytanate, geranylgeraniol, 15-methylpalmitate and (2E,6E)-farnesyl diphosphate. Also catalyzes the sequential oxidation of the terminal methyl of cholest-4-en-3-one into (25R)-26-hydroxycholest-4-en-3-one (alcohol), (25R)-26-oxocholest-4-en-3-one (aldehyde), to finally yield the carboxylic acid (25R)-3-oxocholest-4-en-26-oate. Also able to sequentially oxidize cholesterol itself, not only cholest-4-en-3-one. This chain is Methyl-branched lipid omega-hydroxylase (cyp124), found in Mycobacterium tuberculosis (strain CDC 1551 / Oshkosh).